The chain runs to 367 residues: Peptidyl-prolyl cis-trans isomerase D (367 aa).

The PPIase cyclophilin-type domain occupies 7–171 (FFEVAIGGKT…QPVTIVDCGE (165 aa)). 3 TPR repeats span residues 213-246 (IEKLKSIGTKLFKEGNAEGALKKYLKATTYLEDY), 264-297 (ISCYLNVALMALKVNQPKVAIKAATSALDDETVA), and 302-335 (AKALFRRGSGYAALKNETDALKDLNAALELEPAD).

The protein belongs to the cyclophilin-type PPIase family. PPIase D subfamily.

The protein localises to the cytoplasm. The catalysed reaction is [protein]-peptidylproline (omega=180) = [protein]-peptidylproline (omega=0). Functionally, PPIases accelerate the folding of proteins. It catalyzes the cis-trans isomerization of proline imidic peptide bonds in oligopeptides. The chain is Peptidyl-prolyl cis-trans isomerase D (CPR6) from Yarrowia lipolytica (strain CLIB 122 / E 150) (Yeast).